The sequence spans 203 residues: Guanylate kinase (203 aa).

The region spanning 3–181 (GTLYIVAAPS…AVSEMCAIFT (179 aa)) is the Guanylate kinase-like domain. Residue 10 to 17 (APSGAGKS) coordinates ATP.

It belongs to the guanylate kinase family.

It localises to the cytoplasm. The enzyme catalyses GMP + ATP = GDP + ADP. Its function is as follows. Essential for recycling GMP and indirectly, cGMP. The polypeptide is Guanylate kinase (Xanthomonas axonopodis pv. citri (strain 306)).